The sequence spans 451 residues: Tol-Pal system protein TolB 1 (451 aa).

The signal sequence occupies residues 1–19; sequence MTLRMLFAFALLAAAPAQA. Positions 18–29 are enriched in low complexity; sequence QAQQTEPQPAEE. Disordered stretches follow at residues 18 to 37 and 431 to 451; these read QAQQ…GTVS and NERR…PLLP.

It belongs to the TolB family. In terms of assembly, the Tol-Pal system is composed of five core proteins: the inner membrane proteins TolA, TolQ and TolR, the periplasmic protein TolB and the outer membrane protein Pal. They form a network linking the inner and outer membranes and the peptidoglycan layer.

It localises to the periplasm. Functionally, part of the Tol-Pal system, which plays a role in outer membrane invagination during cell division and is important for maintaining outer membrane integrity. In Novosphingobium aromaticivorans (strain ATCC 700278 / DSM 12444 / CCUG 56034 / CIP 105152 / NBRC 16084 / F199), this protein is Tol-Pal system protein TolB 1.